Reading from the N-terminus, the 474-residue chain is E3 ubiquitin-protein ligase rnf168 (474 aa).

The span at 1-12 (MPPVSEVDRGPV) shows a compositional bias: basic and acidic residues. Residues 1-20 (MPPVSEVDRGPVEESSGGLK) form a disordered region. The segment at 26–65 (CPVCLEIFLEPVTLPCMHTFCKPCFLETVDKSNMCCPLCR) adopts an RING-type zinc-finger fold. The LR motif 1 motif lies at 119–137 (VCQPGELRKEYEDQISKLV). The UMI motif signature appears at 152–160 (EEYIQRLLA). Positions 174 to 195 (EEQQLENDEKLARLLSLELNSG) match the MIU motif 1 motif. Residues 192–203 (LNSGPASESTCN) are compositionally biased toward polar residues. 2 disordered regions span residues 192-259 (LNSG…KPLS) and 367-474 (IQKE…NMGS). Positions 233–243 (PSSSDSSPDSS) are enriched in low complexity. An MIU motif 2 motif is present at residues 353–376 (RWQQEEEDRRLALRIQKELDRENS). A compositionally biased stretch (basic and acidic residues) spans 367-383 (IQKELDRENSVDRRKGS). The short motif at 379-390 (RRKGSADSYQLR) is the LR motif 2 element. 2 stretches are compositionally biased toward polar residues: residues 385 to 402 (DSYQ…TTSP) and 409 to 418 (KGSNTTTAKN). Over residues 422–432 (RRGEEKTEKRL) the composition is skewed to basic and acidic residues. A compositionally biased stretch (low complexity) spans 443–457 (VKTPVSSTAVSSTVK).

Belongs to the RNF168 family. Monomer.

The protein localises to the nucleus. It catalyses the reaction S-ubiquitinyl-[E2 ubiquitin-conjugating enzyme]-L-cysteine + [acceptor protein]-L-lysine = [E2 ubiquitin-conjugating enzyme]-L-cysteine + N(6)-ubiquitinyl-[acceptor protein]-L-lysine.. Its pathway is protein modification; protein ubiquitination. Functionally, E3 ubiquitin-protein ligase required for accumulation of repair proteins to sites of DNA damage. Acts with ube2n/ubc13 to amplify the rnf8-dependent histone ubiquitination. Recruited to sites of DNA damage at double-strand breaks (DSBs) by binding to ubiquitinated histone H2A and ubiquitinates histone H2A and H2AX, leading to amplify the rnf8-dependent H2A ubiquitination and promoting the formation of 'Lys-63'-linked ubiquitin conjugates. This leads to concentrate ubiquitinated histones H2A and H2AX at DNA lesions. Catalyzes monoubiquitination of 'Lys-13' and 'Lys-15' of nucleosomal histone H2A (H2AK13Ub and H2AK15Ub, respectively). This chain is E3 ubiquitin-protein ligase rnf168, found in Danio rerio (Zebrafish).